The following is a 668-amino-acid chain: UvrABC system protein B (668 aa).

Residues 25–176 (THLQSGHSRQ…DQRQLLRNLA (152 aa)) enclose the Helicase ATP-binding domain. 38–45 (GATGTGKT) is an ATP binding site. The Beta-hairpin signature appears at 91-114 (YYDYYQPEAYIPVTDTFIEKTASI). Positions 429–591 (QVDDLLAEIQ…ITPQPVKKGS (163 aa)) constitute a Helicase C-terminal domain. Positions 626 to 661 (PELITQLEAQMKEAAKNLEFEEAAKYRDRIKNLRSK) constitute a UVR domain.

The protein belongs to the UvrB family. As to quaternary structure, forms a heterotetramer with UvrA during the search for lesions. Interacts with UvrC in an incision complex.

The protein localises to the cytoplasm. In terms of biological role, the UvrABC repair system catalyzes the recognition and processing of DNA lesions. A damage recognition complex composed of 2 UvrA and 2 UvrB subunits scans DNA for abnormalities. Upon binding of the UvrA(2)B(2) complex to a putative damaged site, the DNA wraps around one UvrB monomer. DNA wrap is dependent on ATP binding by UvrB and probably causes local melting of the DNA helix, facilitating insertion of UvrB beta-hairpin between the DNA strands. Then UvrB probes one DNA strand for the presence of a lesion. If a lesion is found the UvrA subunits dissociate and the UvrB-DNA preincision complex is formed. This complex is subsequently bound by UvrC and the second UvrB is released. If no lesion is found, the DNA wraps around the other UvrB subunit that will check the other stand for damage. In Acaryochloris marina (strain MBIC 11017), this protein is UvrABC system protein B.